Here is a 390-residue protein sequence, read N- to C-terminus: 3-ketoacyl-CoA thiolase (390 aa).

The active-site Acyl-thioester intermediate is the Cys95. Catalysis depends on proton acceptor residues His346 and Cys376.

The protein belongs to the thiolase-like superfamily. Thiolase family. As to quaternary structure, heterotetramer of two alpha chains (FadB) and two beta chains (FadA).

The protein resides in the cytoplasm. The catalysed reaction is an acyl-CoA + acetyl-CoA = a 3-oxoacyl-CoA + CoA. The protein operates within lipid metabolism; fatty acid beta-oxidation. Catalyzes the final step of fatty acid oxidation in which acetyl-CoA is released and the CoA ester of a fatty acid two carbons shorter is formed. This chain is 3-ketoacyl-CoA thiolase, found in Psychrobacter cryohalolentis (strain ATCC BAA-1226 / DSM 17306 / VKM B-2378 / K5).